The chain runs to 97 residues: Co-chaperonin GroES (97 aa).

Belongs to the GroES chaperonin family. In terms of assembly, heptamer of 7 subunits arranged in a ring. Interacts with the chaperonin GroEL.

The protein resides in the cytoplasm. Functionally, together with the chaperonin GroEL, plays an essential role in assisting protein folding. The GroEL-GroES system forms a nano-cage that allows encapsulation of the non-native substrate proteins and provides a physical environment optimized to promote and accelerate protein folding. GroES binds to the apical surface of the GroEL ring, thereby capping the opening of the GroEL channel. The chain is Co-chaperonin GroES from Edwardsiella ictaluri (strain 93-146).